The sequence spans 764 residues: E3 ubiquitin-protein ligase CBL-B-B (764 aa).

Residues 1–19 (MASSSSSSSNSSTSSSALS) are compositionally biased toward low complexity. Residues 1–27 (MASSSSSSSNSSTSSSALSGRLPGARS) are disordered. Residues 48–180 (PPKQAAADRR…KAIFPSGQFQ (133 aa)) form a 4H region. In terms of domain architecture, Cbl-PTB spans 48–356 (PPKQAAADRR…GRSYNPDLTD (309 aa)). The tract at residues 181–253 (GDTFRITKAD…FEFDIFARLF (73 aa)) is EF-hand-like. Residues Asp234, Thr236, Asn238, Tyr240, and Glu245 each contribute to the Ca(2+) site. Residues 254-356 (QPWSSILRNW…GRSYNPDLTD (103 aa)) are SH2-like. Residue Arg299 participates in 4-O-phospho-L-tyrosine binding. A linker region spans residues 357–385 (LCEPTPHDHIKVTQEQYELYCEMGSTFQL). An RING-type zinc finger spans residues 386 to 425 (CKICAENDKDVKIEPCGHLMCTSCLTSWQESDGQGCPFCR). Disordered regions lie at residues 482–583 (MNER…SRTC) and 707–726 (KVRNSAEEDDSEYKIPSSHP). Polar residues predominate over residues 485–498 (RQNSPVTSPGSSPL). Residues 556–578 (LPAPPPPLREPPPPPERPPPIPP) are compositionally biased toward pro residues.

As to quaternary structure, interacts with several SH3 domain-containing proteins and with poly-ubiquitinated proteins.

It is found in the cytoplasm. It catalyses the reaction S-ubiquitinyl-[E2 ubiquitin-conjugating enzyme]-L-cysteine + [acceptor protein]-L-lysine = [E2 ubiquitin-conjugating enzyme]-L-cysteine + N(6)-ubiquitinyl-[acceptor protein]-L-lysine.. It functions in the pathway protein modification; protein ubiquitination. Functionally, E3 ubiquitin-protein ligase which accepts ubiquitin from specific E2 ubiquitin-conjugating enzymes, and transfers it to substrates, generally promoting their degradation by the proteasome. The protein is E3 ubiquitin-protein ligase CBL-B-B (cblb-b) of Xenopus laevis (African clawed frog).